Consider the following 434-residue polypeptide: Methylenetetrahydrofolate--tRNA-(uracil-5-)-methyltransferase TrmFO (434 aa).

10 to 15 (GAGLAG) is an FAD binding site.

This sequence belongs to the MnmG family. TrmFO subfamily. The cofactor is FAD.

It is found in the cytoplasm. It catalyses the reaction uridine(54) in tRNA + (6R)-5,10-methylene-5,6,7,8-tetrahydrofolate + NADH + H(+) = 5-methyluridine(54) in tRNA + (6S)-5,6,7,8-tetrahydrofolate + NAD(+). It carries out the reaction uridine(54) in tRNA + (6R)-5,10-methylene-5,6,7,8-tetrahydrofolate + NADPH + H(+) = 5-methyluridine(54) in tRNA + (6S)-5,6,7,8-tetrahydrofolate + NADP(+). Its function is as follows. Catalyzes the folate-dependent formation of 5-methyl-uridine at position 54 (M-5-U54) in all tRNAs. This chain is Methylenetetrahydrofolate--tRNA-(uracil-5-)-methyltransferase TrmFO, found in Bacillus cereus (strain AH820).